A 247-amino-acid chain; its full sequence is MIDKKKIAEAFGKAAANYDNFSVIQRIAGNILLSKIETFFNISILDAGCGTGWFSKKWRQLGNTVTALDFSKNMLLTAKNTNSADYYLHADMEQLPICDNIFDLSWSNLSLQWCNKFNKAISELCRVTKPGGMVVFSTIAHGSLYEFNKAYRTINSSYQENKFLSINDIKLSCCNKKTLIDNILITFSFSKILEAMYSFKKIGANYISSNHSKILTKKKIRQLQENWPYNPNGYLLSYRFVFGVIYL.

Belongs to the methyltransferase superfamily.

The catalysed reaction is malonyl-[ACP] + S-adenosyl-L-methionine = malonyl-[ACP] methyl ester + S-adenosyl-L-homocysteine. It functions in the pathway cofactor biosynthesis; biotin biosynthesis. Its function is as follows. Converts the free carboxyl group of a malonyl-thioester to its methyl ester by transfer of a methyl group from S-adenosyl-L-methionine (SAM). It allows to synthesize pimeloyl-ACP via the fatty acid synthetic pathway. The chain is Malonyl-[acyl-carrier protein] O-methyltransferase from Buchnera aphidicola subsp. Baizongia pistaciae (strain Bp).